The following is a 105-amino-acid chain: Small ribosomal subunit protein uS17 (105 aa).

It belongs to the universal ribosomal protein uS17 family. Part of the 30S ribosomal subunit.

Its function is as follows. One of the primary rRNA binding proteins, it binds specifically to the 5'-end of 16S ribosomal RNA. This is Small ribosomal subunit protein uS17 from Thermus aquaticus.